Reading from the N-terminus, the 357-residue chain is MLVLGIETTCDETAAAVIERQADGSGRILSNIVRSQIAEHAPFGGVVPEIAARAHVEMLDVLVDRAMREAGVDFAQLDGIAAAAGPGLIGGVIVGLTTAKAIALVHDTPLIAVNHLEAHALTPRLTVPLAFPYCLFLASGGHTQIVAVLGVGEYVRIGTTVDDALGEAFDKVAKMLDLPYPGGPQVERAAREGDPTRFDFPRPMLGRKDANFSLSGLKTAVRNEASRLMPLELQDIADLCASFQAAVLDSIADRIRSGLRLFREQFGTPRALVAAGGVAANVAIRNALQEIAADDEITMIVPPPQLCTDNGAMIAWAGAERLALGLTDTMEAAPRARWKLDATTETPTKFINTRARH.

Residues H115 and H119 each coordinate Fe cation. Substrate-binding positions include 137 to 141 (LASGG), D170, G183, and N281. A Fe cation-binding site is contributed by D309.

Belongs to the KAE1 / TsaD family. It depends on Fe(2+) as a cofactor.

It is found in the cytoplasm. The catalysed reaction is L-threonylcarbamoyladenylate + adenosine(37) in tRNA = N(6)-L-threonylcarbamoyladenosine(37) in tRNA + AMP + H(+). Functionally, required for the formation of a threonylcarbamoyl group on adenosine at position 37 (t(6)A37) in tRNAs that read codons beginning with adenine. Is involved in the transfer of the threonylcarbamoyl moiety of threonylcarbamoyl-AMP (TC-AMP) to the N6 group of A37, together with TsaE and TsaB. TsaD likely plays a direct catalytic role in this reaction. This chain is tRNA N6-adenosine threonylcarbamoyltransferase, found in Afipia carboxidovorans (strain ATCC 49405 / DSM 1227 / KCTC 32145 / OM5) (Oligotropha carboxidovorans).